The chain runs to 200 residues: GTP cyclohydrolase-2 (200 aa).

49–53 provides a ligand contact to GTP; that stretch reads RVHSE. Zn(2+) contacts are provided by Cys-54, Cys-65, and Cys-67. GTP contacts are provided by residues Gln-70, 92 to 94, and Thr-114; that span reads EGR. Asp-126 (proton acceptor) is an active-site residue. Catalysis depends on Arg-128, which acts as the Nucleophile. 2 residues coordinate GTP: Thr-149 and Lys-154.

It belongs to the GTP cyclohydrolase II family. Homodimer. It depends on Zn(2+) as a cofactor.

It catalyses the reaction GTP + 4 H2O = 2,5-diamino-6-hydroxy-4-(5-phosphoribosylamino)-pyrimidine + formate + 2 phosphate + 3 H(+). It functions in the pathway cofactor biosynthesis; riboflavin biosynthesis; 5-amino-6-(D-ribitylamino)uracil from GTP: step 1/4. Functionally, catalyzes the conversion of GTP to 2,5-diamino-6-ribosylamino-4(3H)-pyrimidinone 5'-phosphate (DARP), formate and pyrophosphate. The polypeptide is GTP cyclohydrolase-2 (Klebsiella pneumoniae (strain 342)).